The chain runs to 128 residues: Small ribosomal subunit protein uS11 (128 aa).

Belongs to the universal ribosomal protein uS11 family. In terms of assembly, part of the 30S ribosomal subunit. Interacts with proteins S7 and S18. Binds to IF-3.

Its function is as follows. Located on the platform of the 30S subunit, it bridges several disparate RNA helices of the 16S rRNA. Forms part of the Shine-Dalgarno cleft in the 70S ribosome. The sequence is that of Small ribosomal subunit protein uS11 from Phytoplasma australiense.